The sequence spans 457 residues: Siroheme synthase (457 aa).

Residues 1–204 (MDHLPIFCQL…NDQKAITETT (204 aa)) form a precorrin-2 dehydrogenase /sirohydrochlorin ferrochelatase region. Residues 22 to 23 (DV) and 43 to 44 (LA) each bind NAD(+). A Phosphoserine modification is found at serine 128. Positions 216 to 457 (GEVVLVGAGP…RDKLNWFSNH (242 aa)) are uroporphyrinogen-III C-methyltransferase. Proline 225 provides a ligand contact to S-adenosyl-L-methionine. Catalysis depends on aspartate 248, which acts as the Proton acceptor. The active-site Proton donor is lysine 270. Residues 301–303 (GGD), isoleucine 306, 331–332 (TA), methionine 382, and glycine 411 each bind S-adenosyl-L-methionine.

It in the N-terminal section; belongs to the precorrin-2 dehydrogenase / sirohydrochlorin ferrochelatase family. This sequence in the C-terminal section; belongs to the precorrin methyltransferase family.

The catalysed reaction is uroporphyrinogen III + 2 S-adenosyl-L-methionine = precorrin-2 + 2 S-adenosyl-L-homocysteine + H(+). The enzyme catalyses precorrin-2 + NAD(+) = sirohydrochlorin + NADH + 2 H(+). It catalyses the reaction siroheme + 2 H(+) = sirohydrochlorin + Fe(2+). It participates in cofactor biosynthesis; adenosylcobalamin biosynthesis; precorrin-2 from uroporphyrinogen III: step 1/1. Its pathway is cofactor biosynthesis; adenosylcobalamin biosynthesis; sirohydrochlorin from precorrin-2: step 1/1. It functions in the pathway porphyrin-containing compound metabolism; siroheme biosynthesis; precorrin-2 from uroporphyrinogen III: step 1/1. The protein operates within porphyrin-containing compound metabolism; siroheme biosynthesis; siroheme from sirohydrochlorin: step 1/1. It participates in porphyrin-containing compound metabolism; siroheme biosynthesis; sirohydrochlorin from precorrin-2: step 1/1. Multifunctional enzyme that catalyzes the SAM-dependent methylations of uroporphyrinogen III at position C-2 and C-7 to form precorrin-2 via precorrin-1. Then it catalyzes the NAD-dependent ring dehydrogenation of precorrin-2 to yield sirohydrochlorin. Finally, it catalyzes the ferrochelation of sirohydrochlorin to yield siroheme. This is Siroheme synthase from Escherichia coli O6:H1 (strain CFT073 / ATCC 700928 / UPEC).